Reading from the N-terminus, the 940-residue chain is UvrABC system protein A (940 aa).

31-38 (GLSGSGKS) provides a ligand contact to ATP. A C4-type zinc finger spans residues 253–280 (CPICGYSMRELEPRLFSFNNPAGACPTC). ABC transporter domains lie at 310 to 587 (WDRR…PESL) and 607 to 937 (ANPE…RFLK). 640-647 (GVSGSGKS) lines the ATP pocket. The C4-type zinc finger occupies 740 to 766 (CEACQGDGVIKVEMHFLPDIYVPCDQC).

Belongs to the ABC transporter superfamily. UvrA family. Forms a heterotetramer with UvrB during the search for lesions.

The protein resides in the cytoplasm. The UvrABC repair system catalyzes the recognition and processing of DNA lesions. UvrA is an ATPase and a DNA-binding protein. A damage recognition complex composed of 2 UvrA and 2 UvrB subunits scans DNA for abnormalities. When the presence of a lesion has been verified by UvrB, the UvrA molecules dissociate. Functionally, plays a role in recovery after DNA ADP-ribosylation. This is UvrABC system protein A from Escherichia coli O127:H6 (strain E2348/69 / EPEC).